Here is a 150-residue protein sequence, read N- to C-terminus: Spore germination protein GerT (150 aa).

Its subcellular location is the spore coat. In terms of biological role, involved in spore germination. In Bacillus licheniformis (strain ATCC 14580 / DSM 13 / JCM 2505 / CCUG 7422 / NBRC 12200 / NCIMB 9375 / NCTC 10341 / NRRL NRS-1264 / Gibson 46), this protein is Spore germination protein GerT (gerT).